The following is an 87-amino-acid chain: Small ribosomal subunit protein bS18 (87 aa).

The tract at residues 1–21 is disordered; that stretch reads MRHKPTPPKGNKSLGNALASK.

The protein belongs to the bacterial ribosomal protein bS18 family. In terms of assembly, part of the 30S ribosomal subunit. Forms a tight heterodimer with protein bS6.

Its function is as follows. Binds as a heterodimer with protein bS6 to the central domain of the 16S rRNA, where it helps stabilize the platform of the 30S subunit. In Chlorobium phaeobacteroides (strain DSM 266 / SMG 266 / 2430), this protein is Small ribosomal subunit protein bS18.